A 496-amino-acid chain; its full sequence is Glycylpeptide N-tetradecanoyltransferase 1 (496 aa).

The segment at 1–81 is disordered; that stretch reads MADESETAVK…DSTQDQPVKM (81 aa). 2 positions are modified to phosphoserine: Ser31 and Ser47. Over residues 55-66 the composition is skewed to basic residues; it reads KKKKKKQKKKKE. A Phosphoserine modification is found at Ser83. Tetradecanoyl-CoA contacts are provided by Gln118, Phe119, Trp120, Phe247, Leu248, Cys249, Val250, Ser256, Arg258, Val259, and Ala260.

The protein belongs to the NMT family.

Its subcellular location is the cytoplasm. The protein resides in the cytosol. The protein localises to the membrane. It catalyses the reaction N-terminal glycyl-[protein] + tetradecanoyl-CoA = N-tetradecanoylglycyl-[protein] + CoA + H(+). The enzyme catalyses N-terminal glycyl-L-lysyl-[protein] + tetradecanoyl-CoA = N-terminal glycyl-(N(6)-tetradecanoyl)-L-lysyl-[protein] + CoA + H(+). Adds a myristoyl group to the N-terminal glycine residue of certain cellular and viral proteins. Also able to mediate N-terminal lysine myristoylation of proteins: catalyzes myristoylation of ARF6 on both 'Gly-2' and 'Lys-3'. Lysine myristoylation is required to maintain ARF6 on membranes during the GTPase cycle. This Rattus norvegicus (Rat) protein is Glycylpeptide N-tetradecanoyltransferase 1 (Nmt1).